The following is a 281-amino-acid chain: CDAN1-interacting nuclease 1 (281 aa).

It is found in the nucleus. It localises to the cytoplasm. In terms of biological role, plays a role in erythroid cell differentiation. The sequence is that of CDAN1-interacting nuclease 1 (CDIN1) from Bos taurus (Bovine).